Reading from the N-terminus, the 185-residue chain is uncharacterized protein (185 aa).

This is an uncharacterized protein from Bacillus subtilis (strain 168).